The primary structure comprises 191 residues: Dephospho-CoA kinase (191 aa).

The region spanning 3–191 (AIGITGSYAS…NLIANLECRV (189 aa)) is the DPCK domain. Residue 11 to 16 (ASGKTF) coordinates ATP.

The protein belongs to the CoaE family.

Its subcellular location is the cytoplasm. The catalysed reaction is 3'-dephospho-CoA + ATP = ADP + CoA + H(+). The protein operates within cofactor biosynthesis; coenzyme A biosynthesis; CoA from (R)-pantothenate: step 5/5. Its function is as follows. Catalyzes the phosphorylation of the 3'-hydroxyl group of dephosphocoenzyme A to form coenzyme A. This is Dephospho-CoA kinase from Rickettsia bellii (strain RML369-C).